The following is a 184-amino-acid chain: Ribosome-recycling factor (184 aa).

Belongs to the RRF family.

Its subcellular location is the cytoplasm. Its function is as follows. Responsible for the release of ribosomes from messenger RNA at the termination of protein biosynthesis. May increase the efficiency of translation by recycling ribosomes from one round of translation to another. The sequence is that of Ribosome-recycling factor from Natranaerobius thermophilus (strain ATCC BAA-1301 / DSM 18059 / JW/NM-WN-LF).